The primary structure comprises 180 residues: NADH-ubiquinone oxidoreductase chain 5 (180 aa).

The chain crosses the membrane as a helical span at residues 131–148 (VYHYAFAMLLGSTPFVTF).

The protein belongs to the complex I subunit 5 family.

The protein localises to the mitochondrion inner membrane. It carries out the reaction a ubiquinone + NADH + 5 H(+)(in) = a ubiquinol + NAD(+) + 4 H(+)(out). Its function is as follows. Core subunit of the mitochondrial membrane respiratory chain NADH dehydrogenase (Complex I) that is believed to belong to the minimal assembly required for catalysis. Complex I functions in the transfer of electrons from NADH to the respiratory chain. The immediate electron acceptor for the enzyme is believed to be ubiquinone. The chain is NADH-ubiquinone oxidoreductase chain 5 (ND5) from Zea mays (Maize).